A 307-amino-acid polypeptide reads, in one-letter code: Aspartate carbamoyltransferase catalytic subunit (307 aa).

Residues Arg-54 and Thr-55 each coordinate carbamoyl phosphate. Lys-83 provides a ligand contact to L-aspartate. Carbamoyl phosphate is bound by residues Arg-104, His-132, and Gln-135. L-aspartate-binding residues include Arg-165 and Arg-228. Carbamoyl phosphate-binding residues include Leu-267 and Pro-268.

This sequence belongs to the aspartate/ornithine carbamoyltransferase superfamily. ATCase family. As to quaternary structure, heterododecamer (2C3:3R2) of six catalytic PyrB chains organized as two trimers (C3), and six regulatory PyrI chains organized as three dimers (R2).

The enzyme catalyses carbamoyl phosphate + L-aspartate = N-carbamoyl-L-aspartate + phosphate + H(+). It participates in pyrimidine metabolism; UMP biosynthesis via de novo pathway; (S)-dihydroorotate from bicarbonate: step 2/3. Catalyzes the condensation of carbamoyl phosphate and aspartate to form carbamoyl aspartate and inorganic phosphate, the committed step in the de novo pyrimidine nucleotide biosynthesis pathway. This Clostridium perfringens (strain ATCC 13124 / DSM 756 / JCM 1290 / NCIMB 6125 / NCTC 8237 / Type A) protein is Aspartate carbamoyltransferase catalytic subunit.